A 161-amino-acid polypeptide reads, in one-letter code: Endoribonuclease YbeY (161 aa).

Residues His-121, His-125, and His-131 each coordinate Zn(2+).

Belongs to the endoribonuclease YbeY family. It depends on Zn(2+) as a cofactor.

It is found in the cytoplasm. In terms of biological role, single strand-specific metallo-endoribonuclease involved in late-stage 70S ribosome quality control and in maturation of the 3' terminus of the 16S rRNA. The sequence is that of Endoribonuclease YbeY from Xanthomonas euvesicatoria pv. vesicatoria (strain 85-10) (Xanthomonas campestris pv. vesicatoria).